Consider the following 985-residue polypeptide: Alpha-glucosidase (985 aa).

Positions 1–25 are cleaved as a signal peptide; the sequence is MVKLTHLLARAWLVPLAYGASQSLL. Threonine 36 carries an O-linked (Man) threonine glycan. N-linked (GlcNAc...) asparagine glycosylation is found at asparagine 124, asparagine 143, asparagine 218, asparagine 347, and asparagine 422. Aspartate 490 (nucleophile) is an active-site residue. The active site involves glutamate 493. N-linked (GlcNAc...) asparagine glycosylation is found at asparagine 506, asparagine 534, and asparagine 537. 2 O-linked (Man) serine glycosylation sites follow: serine 545 and serine 550. A glycan (O-linked (Man) threonine) is linked at threonine 559. Serine 560 carries O-linked (Man) serine glycosylation. Threonine 561 carries an O-linked (Man) threonine glycan. Serine 562 carries O-linked (Man) serine glycosylation. Threonine 571 is a glycosylation site (O-linked (Man) threonine). N-linked (GlcNAc...) asparagine glycosylation is found at asparagine 601 and asparagine 623. The Proton donor role is filled by aspartate 660. N-linked (GlcNAc...) asparagine glycosylation is found at asparagine 835 and asparagine 881. The O-linked (Man) serine glycan is linked to serine 895. Asparagine 899, asparagine 957, and asparagine 970 each carry an N-linked (GlcNAc...) asparagine glycan.

This sequence belongs to the glycosyl hydrolase 31 family. The O-linked saccharide is not identified, but is probably mannose.

It catalyses the reaction Hydrolysis of terminal, non-reducing (1-&gt;4)-linked alpha-D-glucose residues with release of alpha-D-glucose.. Hydrolyzes malto-oligosaccharides, but has a low activity toward soluble starch. This is Alpha-glucosidase (aglA) from Aspergillus niger.